A 91-amino-acid chain; its full sequence is UPF0250 protein PSEEN4821 (91 aa).

The protein belongs to the UPF0250 family.

The polypeptide is UPF0250 protein PSEEN4821 (Pseudomonas entomophila (strain L48)).